The chain runs to 208 residues: Large ribosomal subunit protein uL4 (208 aa).

The disordered stretch occupies residues 51-79; the sequence is AKERAEVSFSTKKLKKQKGTGGARAGSRK.

It belongs to the universal ribosomal protein uL4 family. Part of the 50S ribosomal subunit.

Functionally, one of the primary rRNA binding proteins, this protein initially binds near the 5'-end of the 23S rRNA. It is important during the early stages of 50S assembly. It makes multiple contacts with different domains of the 23S rRNA in the assembled 50S subunit and ribosome. Its function is as follows. Forms part of the polypeptide exit tunnel. The chain is Large ribosomal subunit protein uL4 from Cytophaga hutchinsonii (strain ATCC 33406 / DSM 1761 / CIP 103989 / NBRC 15051 / NCIMB 9469 / D465).